Consider the following 799-residue polypeptide: Pentatricopeptide repeat-containing protein At2g26790, mitochondrial (799 aa).

Residues 1-27 (MRFSPTFFLLSQLRLTRRRAATSSRFY) constitute a mitochondrion transit peptide. PPR repeat units lie at residues 145–179 (LIRV…DCVV), 180–214 (DIKA…GLCA), 215–250 (NEYT…GYKT), 251–278 (FING…KYLA), 282–316 (LRAV…GFGL), 317–351 (DVYA…GLKV), 352–386 (NCVI…NIFL), 387–421 (DRVC…GIVP), 422–456 (DVIN…GMSP), 457–491 (DLIT…GPKP), 492–522 (NAVT…LEQK), 523–553 (CPEN…LEYP), 555–589 (RKSV…RVEP), 590–624 (GRSM…GLIP), 625–659 (DLFT…GIKP), 660–695 (DVVT…KASE), 708–742 (DVVC…GLEP), and 743–777 (DMVA…YNIP).

It belongs to the PPR family. P subfamily.

Its subcellular location is the mitochondrion. The polypeptide is Pentatricopeptide repeat-containing protein At2g26790, mitochondrial (Arabidopsis thaliana (Mouse-ear cress)).